The sequence spans 427 residues: tRNA(Ile)-lysidine synthase (427 aa).

27–32 provides a ligand contact to ATP; sequence SGGVDS.

It belongs to the tRNA(Ile)-lysidine synthase family.

The protein localises to the cytoplasm. The catalysed reaction is cytidine(34) in tRNA(Ile2) + L-lysine + ATP = lysidine(34) in tRNA(Ile2) + AMP + diphosphate + H(+). In terms of biological role, ligates lysine onto the cytidine present at position 34 of the AUA codon-specific tRNA(Ile) that contains the anticodon CAU, in an ATP-dependent manner. Cytidine is converted to lysidine, thus changing the amino acid specificity of the tRNA from methionine to isoleucine. This Streptococcus equi subsp. zooepidemicus (strain H70) protein is tRNA(Ile)-lysidine synthase.